A 111-amino-acid chain; its full sequence is Cell division topological specificity factor (111 aa).

Belongs to the MinE family.

Prevents the cell division inhibition by proteins MinC and MinD at internal division sites while permitting inhibition at polar sites. This ensures cell division at the proper site by restricting the formation of a division septum at the midpoint of the long axis of the cell. In Prochlorococcus marinus (strain MIT 9312), this protein is Cell division topological specificity factor.